Consider the following 231-residue polypeptide: Somatolactin (231 aa).

The N-terminal stretch at 1-24 (MLMFTAIQRGVWVALLWPHLLTAS) is a signal peptide. Cystine bridges form between Cys-29/Cys-39, Cys-89/Cys-205, and Cys-222/Cys-230. N-linked (GlcNAc...) asparagine glycans are attached at residues Asn-35 and Asn-145.

Belongs to the somatotropin/prolactin family. Pituitary gland.

The protein resides in the secreted. The chain is Somatolactin from Siganus guttatus (Orange-spotted spinefoot).